A 129-amino-acid polypeptide reads, in one-letter code: Flagellar assembly factor FliW (129 aa).

Belongs to the FliW family. As to quaternary structure, interacts with flagellins FlaA and FlaB but not with FlaC; recognizes glycosylated and non-glycosylated FlaA equally. Interacts with CsrA. May form a 3-way complex of flagellin, FliS and FliW simultaneously in which FliS and FliW do not directly interact.

It is found in the cytoplasm. Its function is as follows. Acts as an anti-CsrA protein, binds CsrA and prevents it from repressing translation of its target genes, one of which is flagellin. Binds to flagellin and participates in the assembly of the flagellum. In terms of biological role, overexpression leads to increased levels of FlaA and FlaB, but levels of FlaC remain stable. Involved in post-transcriptional regulation of flagellin biosynthesis. The sequence is that of Flagellar assembly factor FliW from Campylobacter jejuni subsp. jejuni serotype O:6 (strain 81116 / NCTC 11828).